The sequence spans 326 residues: Olfactory receptor 10X1 (326 aa).

The Extracellular segment spans residues 1–41 (MVLNVYCCFFQISDIQTMKINQTILKEFILVGFSVYPHVQT). N21 carries an N-linked (GlcNAc...) asparagine glycan. The chain crosses the membrane as a helical span at residues 42-62 (FLFVVFFCLYLLTLAGNLIIM). The Cytoplasmic segment spans residues 63-70 (GLTWVDRS). Residues 71–91 (LHTPMYLFLSALSFSETCYTL) form a helical membrane-spanning segment. Over 92 to 115 (TIVPKMLEDLLAKDRSISVTGCSL) the chain is Extracellular. An intrachain disulfide couples C113 to C205. A helical transmembrane segment spans residues 116 to 136 (QMCFFLGLGGTNCIILTLMGY). Residues 137–155 (DRFLAICNPLRYPLLMTNI) lie on the Cytoplasmic side of the membrane. The chain crosses the membrane as a helical span at residues 156–176 (VCGQLVASACTAGFFISLTET). Over 177–213 (ALIFRDSFCRPNLVKHFFCHMLAVIRLSCIDSNHTEF) the chain is Extracellular. N209 carries an N-linked (GlcNAc...) asparagine glycan. A helical membrane pass occupies residues 214-233 (IITLISVSGLLGTLLLIILT). The Cytoplasmic segment spans residues 234-253 (DVFIISTVLRIPSAEGKQKA). A helical transmembrane segment spans residues 254–274 (FTTCASHLTVVIIHFGFASIV). Residues 275 to 284 (YLKPEASGDD) lie on the Extracellular side of the membrane. A helical membrane pass occupies residues 285–305 (TLIAVPYTVITPFLSPIIFSL). At 306-326 (RNKDMKNAFRRMMGNTVALKK) the chain is on the cytoplasmic side.

The protein belongs to the G-protein coupled receptor 1 family.

It localises to the cell membrane. Functionally, odorant receptor. The protein is Olfactory receptor 10X1 (OR10X1) of Homo sapiens (Human).